Reading from the N-terminus, the 73-residue chain is Translation initiation factor IF-1 1 (73 aa).

One can recognise an S1-like domain in the interval 1–72; that stretch reads MAKEELIEFG…TKGRINFRHK (72 aa).

It belongs to the IF-1 family. As to quaternary structure, component of the 30S ribosomal translation pre-initiation complex which assembles on the 30S ribosome in the order IF-2 and IF-3, IF-1 and N-formylmethionyl-tRNA(fMet); mRNA recruitment can occur at any time during PIC assembly.

The protein resides in the cytoplasm. Functionally, one of the essential components for the initiation of protein synthesis. Stabilizes the binding of IF-2 and IF-3 on the 30S subunit to which N-formylmethionyl-tRNA(fMet) subsequently binds. Helps modulate mRNA selection, yielding the 30S pre-initiation complex (PIC). Upon addition of the 50S ribosomal subunit IF-1, IF-2 and IF-3 are released leaving the mature 70S translation initiation complex. In Cupriavidus pinatubonensis (strain JMP 134 / LMG 1197) (Cupriavidus necator (strain JMP 134)), this protein is Translation initiation factor IF-1 1.